A 318-amino-acid chain; its full sequence is Bis(5'-nucleosyl)-tetraphosphatase, symmetrical (318 aa).

Residues 269-318 (PGREVTGPAPVARAPRRPRERLGRQRSRGNRGNAGNTAVPAKPPVDTPQD) are disordered. Basic residues predominate over residues 282–297 (APRRPRERLGRQRSRG). Residues 309–318 (AKPPVDTPQD) are compositionally biased toward pro residues.

Belongs to the Ap4A hydrolase family.

The enzyme catalyses P(1),P(4)-bis(5'-adenosyl) tetraphosphate + H2O = 2 ADP + 2 H(+). Functionally, hydrolyzes diadenosine 5',5'''-P1,P4-tetraphosphate to yield ADP. This is Bis(5'-nucleosyl)-tetraphosphatase, symmetrical from Xanthomonas oryzae pv. oryzae (strain MAFF 311018).